A 631-amino-acid chain; its full sequence is Nucleoside triphosphatase I (631 aa).

The 163-residue stretch at 42–204 (FLGLDTMHSI…TMIVNLLRPK (163 aa)) folds into the Helicase ATP-binding domain. 55–62 (HDTGVGKT) lines the ATP pocket. The DEXH box signature appears at 141–144 (DECH). The 170-residue stretch at 367–536 (KFTEVCLKIL…LFKVFKESSI (170 aa)) folds into the Helicase C-terminal domain. The binding to the cap-specific mRNA (nucleoside-2'-O-)-methyltransferase stretch occupies residues 457–524 (DIFILDMTWN…NIIKTKSKEF (68 aa)).

The protein belongs to the helicase family. NPH I subfamily. As to quaternary structure, monomer. Interacts (via C-terminus) with RAP94 (via N-terminus). Interacts with the cap-specific mRNA (nucleoside-2'-O-)-methyltransferase.

It localises to the virion. It carries out the reaction a ribonucleoside 5'-triphosphate + H2O = a ribonucleoside 5'-diphosphate + phosphate + H(+). DNA-dependent ATPase required for providing the needed energy to achieve the termination of early transcripts. Acts in concert with the RAP94 subunit of the virion RNA polymerase and the capping enzyme/VTF to catalyze release of UUUUUNU-containing nascent RNA from the elongation complex. NPH-I must bind ssDNA in order to exhibit ATPase activity. This chain is Nucleoside triphosphatase I (NPH1), found in Erythrocebus patas (Red guenon).